The primary structure comprises 261 residues: uncharacterized protein (261 aa).

NADP(+) contacts are provided by I33, K60, D78, and N105. S157 serves as the catalytic Proton donor. NADP(+)-binding residues include Y172, K176, and T206. The Proton acceptor role is filled by Y172. K176 acts as the Lowers pKa of active site Tyr in catalysis.

Belongs to the short-chain dehydrogenases/reductases (SDR) family.

It localises to the cytoplasm. The protein localises to the nucleus. This is an uncharacterized protein from Schizosaccharomyces pombe (strain 972 / ATCC 24843) (Fission yeast).